A 143-amino-acid chain; its full sequence is Transcriptional regulator MraZ (143 aa).

SpoVT-AbrB domains are found at residues 5 to 47 and 76 to 119; these read THTP…PMQE and ASSE…DLRT.

This sequence belongs to the MraZ family. In terms of assembly, forms oligomers.

The protein localises to the cytoplasm. The protein resides in the nucleoid. This is Transcriptional regulator MraZ from Kineococcus radiotolerans (strain ATCC BAA-149 / DSM 14245 / SRS30216).